A 945-amino-acid chain; its full sequence is LPS-assembly protein LptD (945 aa).

Positions 1–33 (MALKSPAFRKKFPLLVTGSLLALQPLATSFVVA) are cleaved as a signal peptide. The interval 56 to 98 (AQLPPRPVHDANSVSSSVATAADATGEEASGDKSKLVTEAKGR) is disordered. Over residues 65-79 (DANSVSSSVATAADA) the composition is skewed to low complexity. Residues 85–98 (SGDKSKLVTEAKGR) are compositionally biased toward basic and acidic residues.

It belongs to the LptD family. Component of the lipopolysaccharide transport and assembly complex. Interacts with LptE and LptA.

The protein localises to the cell outer membrane. Its function is as follows. Together with LptE, is involved in the assembly of lipopolysaccharide (LPS) at the surface of the outer membrane. The chain is LPS-assembly protein LptD from Pseudomonas fluorescens (strain ATCC BAA-477 / NRRL B-23932 / Pf-5).